Here is a 407-residue protein sequence, read N- to C-terminus: tRNA N6-adenosine threonylcarbamoyltransferase, mitochondrial (407 aa).

Residues 1–30 (MISIKGTGRFLLDNYRIWQRRAFNRPIQLR) constitute a mitochondrion transit peptide. Residues His145 and His149 each coordinate a divalent metal cation. Substrate-binding positions include 170 to 174 (LVSGG), Asp203, Ala217, Glu221, 328 to 329 (SN), and Ser360. Position 361 (Asp361) interacts with a divalent metal cation.

This sequence belongs to the KAE1 / TsaD family. As to quaternary structure, homodimer. A divalent metal cation serves as cofactor.

It localises to the mitochondrion. The enzyme catalyses L-threonylcarbamoyladenylate + adenosine(37) in tRNA = N(6)-L-threonylcarbamoyladenosine(37) in tRNA + AMP + H(+). Its function is as follows. Required for the formation of a threonylcarbamoyl group on adenosine at position 37 (t(6)A37) in mitochondrial tRNAs that read codons beginning with adenine. Probably involved in the transfer of the threonylcarbamoyl moiety of threonylcarbamoyl-AMP (TC-AMP) to the N6 group of A37. Involved in mitochondrial genome maintenance. In Saccharomyces cerevisiae (strain ATCC 204508 / S288c) (Baker's yeast), this protein is tRNA N6-adenosine threonylcarbamoyltransferase, mitochondrial (QRI7).